The chain runs to 478 residues: Ubiquitin carboxyl-terminal hydrolase calypso (478 aa).

One can recognise a UCH catalytic domain in the interval 11–239 (GWLELESDPG…IRFNLMAVVP (229 aa)). Residue C97 is the Nucleophile of the active site. The Proton donor role is filled by H176. The region spanning 400 to 428 (NYDEFICTFLSMLAHQGELGDLVSQHLIT) is the ULD domain. The interval 430–478 (RKPNMGSVQNSGSRGVVRNYNKKTTTNGSSPKTPSSKRRRGRTKYRKRK) is positively charged C-terminal tail required for binding nucleosomes. Over residues 432 to 442 (PNMGSVQNSGS) the composition is skewed to polar residues. The interval 432-478 (PNMGSVQNSGSRGVVRNYNKKTTTNGSSPKTPSSKRRRGRTKYRKRK) is disordered. Residues 464–478 (SSKRRRGRTKYRKRK) show a composition bias toward basic residues.

Belongs to the peptidase C12 family. BAP1 subfamily. In terms of assembly, catalytic component of the polycomb repressive deubiquitinase (PR-DUB) complex, at least composed of caly/calypso, Asx and sba (MBD5/6 homolog). The PR-DUB complex associates with nucleosomes to mediate deubiquitination of histone H2AK118ub1 substrates; the association requires the positively charged C-terminal tail of caly, probably due to direct binding of DNA. Interacts (via ULD domain) with Asx (via DEUBAD domain); the interaction produces a stable heterodimer with a composite binding site for ubiquitin. Homodimerizes (via coiled-coil hinge-region between the UCH and ULD domains) to mediate assembly of 2 copies of the caly-Asx heterodimer into a bisymmetric tetramer; dimerization enhances PR-DUB association with nucleosomes.

The protein resides in the nucleus. It catalyses the reaction Thiol-dependent hydrolysis of ester, thioester, amide, peptide and isopeptide bonds formed by the C-terminal Gly of ubiquitin (a 76-residue protein attached to proteins as an intracellular targeting signal).. Catalytic component of the polycomb repressive deubiquitinase (PR-DUB) complex, a complex that specifically mediates deubiquitination of histone H2A monoubiquitinated at 'Lys-119' (H2AK118ub1). Mediates bisymmetric organization of the PR-DUB complex and is involved in association with nucleosomes to mediate deubiquitination. Does not deubiquitinate monoubiquitinated histone H2B. Required to maintain the transcriptionally repressive state of homeotic genes throughout development. The PR-DUB complex has weak or no activity toward 'Lys-48'- and 'Lys-63'-linked polyubiquitin chains. Polycomb group (PcG) protein. This Aedes aegypti (Yellowfever mosquito) protein is Ubiquitin carboxyl-terminal hydrolase calypso.